A 245-amino-acid chain; its full sequence is Orotidine 5'-phosphate decarboxylase (245 aa).

Substrate-binding positions include D22, K44, 71–80 (DLKFHDIPNT), T131, R192, Q201, G221, and R222. K73 functions as the Proton donor in the catalytic mechanism.

It belongs to the OMP decarboxylase family. Type 1 subfamily. Homodimer.

It catalyses the reaction orotidine 5'-phosphate + H(+) = UMP + CO2. Its pathway is pyrimidine metabolism; UMP biosynthesis via de novo pathway; UMP from orotate: step 2/2. In terms of biological role, catalyzes the decarboxylation of orotidine 5'-monophosphate (OMP) to uridine 5'-monophosphate (UMP). The protein is Orotidine 5'-phosphate decarboxylase of Escherichia coli O127:H6 (strain E2348/69 / EPEC).